Consider the following 222-residue polypeptide: Secreted protein D (222 aa).

The signal sequence occupies residues 1-22 (MKIYYLFFVLIYLIYFINLVYC). N-linked (GlcNAc...) asparagine glycosylation is present at N25.

The protein belongs to the Sct family.

The protein resides in the secreted. This Dictyostelium discoideum (Social amoeba) protein is Secreted protein D.